We begin with the raw amino-acid sequence, 982 residues long: Serine/threonine-protein kinase SULU (982 aa).

The region spanning 30-289 is the Protein kinase domain; it reads YQDLREIGHG…AEECFRHPFI (260 aa). Residues 36–44 and Lys-59 each bind ATP; that span reads IGHGSFGAV. The active-site Proton acceptor is Asp-153. Disordered regions lie at residues 331–484, 592–620, 751–789, and 957–982; these read GKEG…PLDT, QNNE…QNQQ, LETQ…RDLK, and RTGS…QMAM. A compositionally biased stretch (low complexity) spans 353–373; the sequence is SIGRAGDSASSRSASLTSFRS. Residues 421–431 are compositionally biased toward polar residues; that stretch reads QMLSSTSTSGV. Low complexity predominate over residues 459 to 472; the sequence is IPTSQPTSKSESSS. The span at 595–608 shows a compositional bias: basic and acidic residues; the sequence is ELDKRKKDIEDGEK. The segment covering 759–768 has biased composition (polar residues); the sequence is SASQNEYTQR. Residues 957-967 show a composition bias toward low complexity; sequence RTGSTSRSSGG. Residues 973 to 982 are compositionally biased toward polar residues; it reads GNSSSIQMAM.

This sequence belongs to the protein kinase superfamily. Ser/Thr protein kinase family. STE20 subfamily. Requires Mg(2+) as cofactor. In terms of tissue distribution, expressed in the pharynx, including the pharyngeal muscle of the metacorpus, the isthmus, and the terminal bulb; in the intestine, including the pharyngeointestinal valve between the pharynx and the intestine, a structure near the anus likely to be the anal sphincter and the excretory cell and in several ring neurons.

It is found in the cytoplasm. The protein localises to the cytoskeleton. It localises to the cell cortex. It carries out the reaction L-seryl-[protein] + ATP = O-phospho-L-seryl-[protein] + ADP + H(+). It catalyses the reaction L-threonyl-[protein] + ATP = O-phospho-L-threonyl-[protein] + ADP + H(+). Its function is as follows. Acts as a negative regulator of cortical contractions during early embryonic cell division, possibly by regulating rho-1-dependent actomyosin contractility. Plays a role in polarity establishment in early embryos by regulating the size of the anterior and posterior cortex in the first asymmetric cell division. Might play a role in cell cycle progression. In the germline, involved in the regulation of meiotic progression during oogenesis, possibly by modulating the timing of mpk-1 activation. Plays a role in meiotic recombination events. Involved in pharyngeal pumping. This is Serine/threonine-protein kinase SULU (kin-18) from Caenorhabditis elegans.